Consider the following 152-residue polypeptide: D-aminoacyl-tRNA deacylase (152 aa).

The short motif at 142–143 (GP) is the Gly-cisPro motif, important for rejection of L-amino acids element.

Belongs to the DTD family. As to quaternary structure, homodimer.

The protein localises to the cytoplasm. It catalyses the reaction glycyl-tRNA(Ala) + H2O = tRNA(Ala) + glycine + H(+). It carries out the reaction a D-aminoacyl-tRNA + H2O = a tRNA + a D-alpha-amino acid + H(+). Functionally, an aminoacyl-tRNA editing enzyme that deacylates mischarged D-aminoacyl-tRNAs. Also deacylates mischarged glycyl-tRNA(Ala), protecting cells against glycine mischarging by AlaRS. Acts via tRNA-based rather than protein-based catalysis; rejects L-amino acids rather than detecting D-amino acids in the active site. By recycling D-aminoacyl-tRNA to D-amino acids and free tRNA molecules, this enzyme counteracts the toxicity associated with the formation of D-aminoacyl-tRNA entities in vivo and helps enforce protein L-homochirality. The sequence is that of D-aminoacyl-tRNA deacylase from Burkholderia cenocepacia (strain ATCC BAA-245 / DSM 16553 / LMG 16656 / NCTC 13227 / J2315 / CF5610) (Burkholderia cepacia (strain J2315)).